Consider the following 622-residue polypeptide: Sodium-coupled monocarboxylate transporter 1 (622 aa).

Residues 1–15 are Extracellular-facing; the sequence is MVTPGNIGSFTVWDY. Residues 16 to 36 traverse the membrane as a helical segment; it reads LVFALMLLISAVIGIYYAFAG. The Cytoplasmic portion of the chain corresponds to 37–51; it reads GGQKTSKDFLMGGRS. Residues 52-72 form a helical membrane-spanning segment; it reads MTAVPVALSLTASFMSAVTVL. At 73-83 the chain is on the extracellular side; that stretch reads GTPAEVYRFGA. Residues 84 to 104 traverse the membrane as a helical segment; the sequence is MFIIFAFSYTIVVIISSEVFL. Over 105–128 the chain is Cytoplasmic; sequence PVFYRLGITSTYEYLELRFNKFVR. The helical transmembrane segment at 129–149 threads the bilayer; it reads LLGTILFIIQTVLYTGIVIYA. The Extracellular segment spans residues 150 to 161; the sequence is PALALNQVTGFD. Residues 162-182 form a helical membrane-spanning segment; it reads LWGAVVATGVVCTFYCTMGGL. Residues 183-184 lie on the Cytoplasmic side of the membrane; sequence KA. The helical transmembrane segment at 185 to 205 threads the bilayer; sequence VVWTDVFQVGIMVAGFTSVII. Over 206-241 the chain is Extracellular; it reads RAVVVQGGIGPILNDSYYGDRLNFWDFDPNPLKRHT. N-linked (GlcNAc...) asparagine glycosylation is present at N219. Residues 242–262 traverse the membrane as a helical segment; that stretch reads FWTIVVGGTFTWTGIYGVNQA. Residues 263-283 are Cytoplasmic-facing; that stretch reads QVQRYIACKTRFQAKMSLYVN. Residues 284–304 form a helical membrane-spanning segment; it reads LIGLWAILACAVLSGLAMYSI. Residues 305-336 lie on the Extracellular side of the membrane; sequence YKDCDPWTAKFVSAPDQLMPYLALDILRDYPG. Residues 337–357 form a helical membrane-spanning segment; sequence LPGLFVSCAYSGTLSTVSSSI. The Cytoplasmic portion of the chain corresponds to 358–389; the sequence is NALAAVTVEDLIKPYIRSLSEKKMSWISKGTS. The chain crosses the membrane as a helical span at residues 390–410; it reads LLYGAICIGMAGIASLMGGLL. At 411–415 the chain is on the extracellular side; the sequence is QAALS. A helical membrane pass occupies residues 416-436; sequence IFGMVGGPLLGLFSLGILFPF. Residues 437–438 are Cytoplasmic-facing; the sequence is VN. Residues 439–459 traverse the membrane as a helical segment; it reads SLGAVIGLLSGFAISLWVGIG. Residues 460–521 are Extracellular-facing; the sequence is SQIYAPSPSS…LADSWYSLSY (62 aa). 2 N-linked (GlcNAc...) asparagine glycosylation sites follow: N481 and N488. The chain crosses the membrane as a helical span at residues 522–542; it reads LYFSTIGTIVAVLVGVIVSLL. Topologically, residues 543 to 622 are cytoplasmic; sequence SGGLKQNVNR…KGEKTNGITA (80 aa). The tract at residues 591-622 is disordered; the sequence is DNDMEQGTDNPAFNNMEMTSTEKGEKTNGITA. Positions 595–609 are enriched in polar residues; that stretch reads EQGTDNPAFNNMEMT.

Belongs to the sodium:solute symporter (SSF) (TC 2.A.21) family. In the gastrula and neurula stages, expressed in the gastrula anterior endoderm and in the entire circumference of the blastopore lip superficial endoderm. At tailbud stages, abundant expression observed in the ventral midgut region. As development proceeds expression becomes restricted to the liver diverticulum and ultimately to the presumptive gallbladder, by tadpole stage 35. Also present in pronephros and the tip of the tail.

The protein localises to the apical cell membrane. It catalyses the reaction (S)-lactate(out) + 2 Na(+)(out) = (S)-lactate(in) + 2 Na(+)(in). The enzyme catalyses propanoate(out) + 2 Na(+)(out) = propanoate(in) + 2 Na(+)(in). The catalysed reaction is pyruvate(out) + 2 Na(+)(out) = pyruvate(in) + 2 Na(+)(in). It carries out the reaction acetate(out) + 2 Na(+)(out) = acetate(in) + 2 Na(+)(in). It catalyses the reaction butanoate(out) + 2 Na(+)(out) = butanoate(in) + 2 Na(+)(in). The enzyme catalyses nicotinate(out) + 2 Na(+)(out) = nicotinate(in) + 2 Na(+)(in). The catalysed reaction is (R)-3-hydroxybutanoate(out) + 2 Na(+)(out) = (R)-3-hydroxybutanoate(in) + 2 Na(+)(in). It carries out the reaction acetoacetate(out) + 2 Na(+)(out) = acetoacetate(in) + 2 Na(+)(in). It catalyses the reaction 4-methyl-2-oxopentanoate(out) + 2 Na(+)(out) = 4-methyl-2-oxopentanoate(in) + 2 Na(+)(in). The enzyme catalyses 5-oxo-L-proline(out) + 2 Na(+)(out) = 5-oxo-L-proline(in) + 2 Na(+)(in). The catalysed reaction is iodide(out) = iodide(in). It carries out the reaction chloride(in) = chloride(out). It catalyses the reaction nitrate(in) = nitrate(out). The enzyme catalyses bromide(in) = bromide(out). In terms of biological role, acts as an electrogenic sodium (Na(+)) and chloride (Cl-)-dependent sodium-coupled solute transporter, including transport of monocarboxylates (short-chain fatty acids including L-lactate, D-lactate, pyruvate, acetate, propionate, valerate and butyrate), mocarboxylate drugs (nicotinate, benzoate, salicylate and 5-aminosalicylate) and ketone bodies (beta-D-hydroxybutyrate, acetoacetate and alpha-ketoisocaproate), with a Na(+):substrate stoichiometry of between 4:1 and 2:1. Catalyzes passive carrier mediated diffusion of iodide. Mediates iodide transport from the thyrocyte into the colloid lumen through the apical membrane. Mediates sodium-coupled electrogenic transport of pyroglutamate (5-oxo-L-proline). Can mediate the transport of chloride, bromide, iodide and nitrate ions when external concentration of sodium ions is reduced. The chain is Sodium-coupled monocarboxylate transporter 1 from Xenopus laevis (African clawed frog).